A 213-amino-acid polypeptide reads, in one-letter code: Protein GET1 (213 aa).

Residues 1-4 are Lumenal-facing; it reads MPSL. Residues 5 to 24 form a helical membrane-spanning segment; sequence LLVVFILQFLLHIINTVGAS. Residues 25–110 lie on the Cytoplasmic side of the membrane; it reads TVNDLLWILY…AFTSAVSTLR (86 aa). Positions 41–68 form a coiled coil; the sequence is TSSSAQKAQKLKKEIVQLKRELGATSAQ. Residues 111–131 traverse the membrane as a helical segment; the sequence is WLGTQGLRFVLQFWFAKSPMF. Topologically, residues 132–155 are lumenal; that stretch reads WMPAGWLPFYVEWILSFPRAPLGS. The helical transmembrane segment at 156–172 threads the bilayer; the sequence is VSINVWGIACASMIALA. Residues 173 to 213 are Cytoplasmic-facing; sequence AEGLAAVWVLATKRPTPIATEKKEAMAFAADQKSSGEKKEL.

Belongs to the WRB/GET1 family. As to quaternary structure, interacts with GET3.

It localises to the endoplasmic reticulum membrane. Its function is as follows. Required for the post-translational delivery of tail-anchored (TA) proteins to the endoplasmic reticulum. Acts as a membrane receptor for soluble GET3, which recognizes and selectively binds the transmembrane domain of TA proteins in the cytosol. This Phaeosphaeria nodorum (strain SN15 / ATCC MYA-4574 / FGSC 10173) (Glume blotch fungus) protein is Protein GET1.